We begin with the raw amino-acid sequence, 182 residues long: Protein Syd (182 aa).

Belongs to the Syd family.

The protein localises to the cell inner membrane. Interacts with the SecY protein in vivo. May bind preferentially to an uncomplexed state of SecY, thus functioning either as a chelating agent for excess SecY in the cell or as a regulatory factor that negatively controls the translocase function. This Aeromonas hydrophila subsp. hydrophila (strain ATCC 7966 / DSM 30187 / BCRC 13018 / CCUG 14551 / JCM 1027 / KCTC 2358 / NCIMB 9240 / NCTC 8049) protein is Protein Syd.